The chain runs to 390 residues: Probable splicing factor YJU2B (390 aa).

The disordered stretch occupies residues 354–390 (DACKASSSSEEENSIDSCATGKSLVADYSDSDSGSEV).

The protein belongs to the CWC16 family.

It localises to the nucleus. May be involved in mRNA splicing. This is Probable splicing factor YJU2B (yju2b) from Danio rerio (Zebrafish).